The chain runs to 213 residues: High frequency lysogenization protein HflD homolog (213 aa).

Residues 79-122 are a coiled coil; sequence QGLNAELTRYTLSLMVLERKLSSAKGALNTLGDRINGLQRQLDH.

This sequence belongs to the HflD family.

The protein resides in the cytoplasm. The protein localises to the cell inner membrane. The sequence is that of High frequency lysogenization protein HflD homolog from Salmonella dublin (strain CT_02021853).